We begin with the raw amino-acid sequence, 336 residues long: Probable GTPase MT1543 (336 aa).

Residues 67–75 (GVPGVGKST), Asp209, and 245–247 (SAV) each bind GTP.

It belongs to the SIMIBI class G3E GTPase family. ArgK/MeaB subfamily. In terms of assembly, homodimer.

Probable GTPase. May also bind and hydrolyze ATP. May function as chaperone. The polypeptide is Probable GTPase MT1543 (Mycobacterium tuberculosis (strain CDC 1551 / Oshkosh)).